We begin with the raw amino-acid sequence, 392 residues long: uncharacterized protein (392 aa).

This sequence belongs to the hcp1 family.

This is an uncharacterized protein from Escherichia coli (strain K12).